We begin with the raw amino-acid sequence, 181 residues long: Cell division protein SepF (181 aa).

Residues 18-27 (EDYLDDDDYD) show a composition bias toward acidic residues. A disordered region spans residues 18–42 (EDYLDDDDYDDGRAVGHDDRRAMHE). The span at 28-42 (DGRAVGHDDRRAMHE) shows a compositional bias: basic and acidic residues.

It belongs to the SepF family. In terms of assembly, homodimer. Interacts with FtsZ.

The protein resides in the cytoplasm. In terms of biological role, cell division protein that is part of the divisome complex and is recruited early to the Z-ring. Probably stimulates Z-ring formation, perhaps through the cross-linking of FtsZ protofilaments. Its function overlaps with FtsA. In Frankia alni (strain DSM 45986 / CECT 9034 / ACN14a), this protein is Cell division protein SepF.